The primary structure comprises 552 residues: uncharacterized protein (552 aa).

This is an uncharacterized protein from Bacillus subtilis (strain 168).